The chain runs to 862 residues: Probable alpha,alpha-trehalose-phosphate synthase [UDP-forming] 11 (862 aa).

A Phosphoserine modification is found at S5. The interval 50–538 (PKRIVVSNQL…ARSYDQDLQR (489 aa)) is glycosyltransferase. Positions 838–862 (SKHEQQKKQSKFTFQQPMGQCRKKA) are disordered.

The protein in the N-terminal section; belongs to the glycosyltransferase 20 family. This sequence in the C-terminal section; belongs to the trehalose phosphatase family. Expressed in leaves, roots, stems and flowers.

It catalyses the reaction D-glucose 6-phosphate + UDP-alpha-D-glucose = alpha,alpha-trehalose 6-phosphate + UDP + H(+). This chain is Probable alpha,alpha-trehalose-phosphate synthase [UDP-forming] 11 (TPS11), found in Arabidopsis thaliana (Mouse-ear cress).